A 934-amino-acid polypeptide reads, in one-letter code: Bifunctional uridylyltransferase/uridylyl-removing enzyme (934 aa).

Positions 1–379 (MSAHDLKLEE…TFSRRKRKLS (379 aa)) are uridylyltransferase. The uridylyl-removing stretch occupies residues 380–736 (DDGAFISENH…AKPHAFEAVT (357 aa)). One can recognise an HD domain in the interval 496–613 (VDEHLLRCIA…IDFADTVQTM (118 aa)). ACT domains are found at residues 737-818 (EITV…DMLA) and 848-931 (VIEV…RSPQ).

Belongs to the GlnD family. Requires Mg(2+) as cofactor.

The enzyme catalyses [protein-PII]-L-tyrosine + UTP = [protein-PII]-uridylyl-L-tyrosine + diphosphate. It catalyses the reaction [protein-PII]-uridylyl-L-tyrosine + H2O = [protein-PII]-L-tyrosine + UMP + H(+). Its activity is regulated as follows. Uridylyltransferase (UTase) activity is inhibited by glutamine, while glutamine activates uridylyl-removing (UR) activity. Functionally, modifies, by uridylylation and deuridylylation, the PII regulatory proteins (GlnB and homologs), in response to the nitrogen status of the cell that GlnD senses through the glutamine level. Under low glutamine levels, catalyzes the conversion of the PII proteins and UTP to PII-UMP and PPi, while under higher glutamine levels, GlnD hydrolyzes PII-UMP to PII and UMP (deuridylylation). Thus, controls uridylylation state and activity of the PII proteins, and plays an important role in the regulation of nitrogen assimilation and metabolism. The sequence is that of Bifunctional uridylyltransferase/uridylyl-removing enzyme from Brucella melitensis biotype 2 (strain ATCC 23457).